The sequence spans 289 residues: MSNISAKLVKELRERTGAGMMECKKALVAAAGDIEKAAEEMRISGQAKADKKASRVAAEGVIEVYAADGRAILLEINSETDFVARDETFKKFAQEAVKAAHAANAKTIEEVLAAKTSNGETVEEARKSLIAKIGENIQVRRVKTVEAETLGAYIHGSKIGVVAALEGGDEDLAKDVAMHVAAANPMVVSGDQVPADVVAKEKEIFTAQAKESGKPAEIIEKMIVGRIRKFLDEVALLGQDFVKDPAIKVEKLVKDKGAKVVNFIRLDVGEGIEKKEEDFAAEVMSQIKG.

Residues 80–83 form an involved in Mg(2+) ion dislocation from EF-Tu region; the sequence is TDFV.

Belongs to the EF-Ts family.

The protein resides in the cytoplasm. Its function is as follows. Associates with the EF-Tu.GDP complex and induces the exchange of GDP to GTP. It remains bound to the aminoacyl-tRNA.EF-Tu.GTP complex up to the GTP hydrolysis stage on the ribosome. The polypeptide is Elongation factor Ts (Francisella tularensis subsp. holarctica (strain LVS)).